We begin with the raw amino-acid sequence, 332 residues long: Tetraacyldisaccharide 4'-kinase (332 aa).

53–60 (SVGGNGKT) contributes to the ATP binding site.

The protein belongs to the LpxK family.

It catalyses the reaction a lipid A disaccharide + ATP = a lipid IVA + ADP + H(+). The protein operates within glycolipid biosynthesis; lipid IV(A) biosynthesis; lipid IV(A) from (3R)-3-hydroxytetradecanoyl-[acyl-carrier-protein] and UDP-N-acetyl-alpha-D-glucosamine: step 6/6. In terms of biological role, transfers the gamma-phosphate of ATP to the 4'-position of a tetraacyldisaccharide 1-phosphate intermediate (termed DS-1-P) to form tetraacyldisaccharide 1,4'-bis-phosphate (lipid IVA). The sequence is that of Tetraacyldisaccharide 4'-kinase from Haemophilus influenzae (strain 86-028NP).